A 117-amino-acid polypeptide reads, in one-letter code: Alpha-endosulfine (117 aa).

The disordered stretch occupies residues 1-53 (MAAPLGTGARAEDSGQEKQDSQEKETVIPERAEEAKLKAKYPNLGQKPGGSDF). Residues 10–37 (RAEDSGQEKQDSQEKETVIPERAEEAKL) show a composition bias toward basic and acidic residues. At S67 the chain carries Phosphoserine; by GWL. Positions 76-117 (KMKNKQLPTAGPDKNLVTGDHIPKPQDLPQRKSSLVASKLAG) are disordered.

The protein belongs to the endosulfine family. Post-translationally, phosphorylation at Ser-67 by GWL during mitosis is essential for interaction with PPP2R2D (PR55-delta) and subsequent inactivation of PP2A.

It localises to the cytoplasm. In terms of biological role, protein phosphatase inhibitor that specifically inhibits protein phosphatase 2A (PP2A) during mitosis. When phosphorylated at Ser-67 during mitosis, specifically interacts with PPP2R2D (PR55-delta) and inhibits its activity, leading to inactivation of PP2A, an essential condition to keep cyclin-B1-CDK1 activity high during M phase. This is Alpha-endosulfine (ENSA) from Gallus gallus (Chicken).